Here is a 67-residue protein sequence, read N- to C-terminus: uncharacterized protein (67 aa).

This is an uncharacterized protein from Rickettsia prowazekii (strain Madrid E).